The chain runs to 93 residues: Large ribosomal subunit protein bL27 (93 aa).

Residues 1-10 (MRFLLGLQYF) constitute a propeptide that is removed on maturation. The disordered stretch occupies residues 14 to 36 (KGVGSTKNGRDSESKRLGAKKSD). Basic and acidic residues predominate over residues 21 to 36 (NGRDSESKRLGAKKSD).

The protein belongs to the bacterial ribosomal protein bL27 family. In terms of processing, the N-terminus is cleaved by ribosomal processing cysteine protease Prp.

The sequence is that of Large ribosomal subunit protein bL27 from Mycoplasma capricolum subsp. capricolum (strain California kid / ATCC 27343 / NCTC 10154).